Here is a 378-residue protein sequence, read N- to C-terminus: UPF0754 membrane protein SH1116 (378 aa).

2 consecutive transmembrane segments (helical) span residues 4–24 (FLVI…TNVI) and 358–378 (SLGF…AIFV).

It belongs to the UPF0754 family.

It localises to the cell membrane. The sequence is that of UPF0754 membrane protein SH1116 from Staphylococcus haemolyticus (strain JCSC1435).